Reading from the N-terminus, the 180-residue chain is ATP-dependent protease subunit HslV (180 aa).

Thr-5 is a catalytic residue. Na(+)-binding residues include Gly-165, Cys-168, and Thr-171.

Belongs to the peptidase T1B family. HslV subfamily. A double ring-shaped homohexamer of HslV is capped on each side by a ring-shaped HslU homohexamer. The assembly of the HslU/HslV complex is dependent on binding of ATP.

It localises to the cytoplasm. It carries out the reaction ATP-dependent cleavage of peptide bonds with broad specificity.. With respect to regulation, allosterically activated by HslU binding. Its function is as follows. Protease subunit of a proteasome-like degradation complex believed to be a general protein degrading machinery. This chain is ATP-dependent protease subunit HslV, found in Helicobacter pylori (strain HPAG1).